The chain runs to 293 residues: Protease HtpX (293 aa).

2 helical membrane-spanning segments follow: residues I4 to L24 and G34 to S54. Zn(2+) is bound at residue H139. E140 is an active-site residue. Zn(2+) is bound at residue H143. Transmembrane regions (helical) follow at residues V158–M178 and L193–I213. Position 222 (E222) interacts with Zn(2+).

Belongs to the peptidase M48B family. Zn(2+) is required as a cofactor.

The protein localises to the cell inner membrane. This Escherichia coli O127:H6 (strain E2348/69 / EPEC) protein is Protease HtpX.